The following is a 300-amino-acid chain: Interferon-stimulated gene 20 kDa protein (300 aa).

Residues Asp11, Glu13, Asp90, and His93 each coordinate Mn(2+).

It belongs to the exonuclease superfamily. Associates with PML and SP100 in the PML NB complex. Associates with survival motor neuron protein (SMN)-containing macromolecular nuclear complexes and U1 and U2 snRNAs and U3 snoRNA. Mn(2+) serves as cofactor.

It is found in the nucleus. Its subcellular location is the nucleolus. It localises to the cytoplasm. The protein resides in the cajal body. The protein localises to the P-body. It carries out the reaction Exonucleolytic cleavage in the 3'- to 5'-direction to yield nucleoside 5'-phosphates.. In terms of biological role, interferon-induced antiviral exoribonuclease that acts mainly on single-stranded RNA. Inhibition of several viruses does not involve the degradation of viral RNAs, but rather the inhibition of translation of viral proteins. Exerts a translational control over a large panel of non-self RNA substrates while sparing endogenous transcripts. This activity correlates with the protein's ability to localize in cytoplasmic processing bodies. May also act as master regulator of over hundred interferon stimulated genes leading to viral genome translation inhibition. May play additional roles in the maturation of snRNAs and rRNAs, and in ribosome biogenesis. This Mus musculus (Mouse) protein is Interferon-stimulated gene 20 kDa protein (Isg20).